Consider the following 706-residue polypeptide: Translation initiation factor IF-2 (706 aa).

A disordered region spans residues 55–117 (KEVNSDSNQE…PTMKDEKGLI (63 aa)). The span at 67–81 (VNTDDKLDKIDKPNK) shows a compositional bias: basic and acidic residues. The segment covering 93-108 (KNKKSKKKQKNKKKGP) has biased composition (basic residues). Positions 208–375 (SRPPVVTVMG…MILLVSEVEE (168 aa)) constitute a tr-type G domain. Residues 217 to 224 (GHVDHGKT) form a G1 region. Residue 217–224 (GHVDHGKT) coordinates GTP. The G2 stretch occupies residues 242–246 (GITQH). A G3 region spans residues 263-266 (DTPG). GTP contacts are provided by residues 263–267 (DTPGH) and 317–320 (NKID). Residues 317 to 320 (NKID) are G4. The G5 stretch occupies residues 353–355 (SAI).

This sequence belongs to the TRAFAC class translation factor GTPase superfamily. Classic translation factor GTPase family. IF-2 subfamily.

The protein localises to the cytoplasm. Functionally, one of the essential components for the initiation of protein synthesis. Protects formylmethionyl-tRNA from spontaneous hydrolysis and promotes its binding to the 30S ribosomal subunits. Also involved in the hydrolysis of GTP during the formation of the 70S ribosomal complex. The chain is Translation initiation factor IF-2 from Alkaliphilus metalliredigens (strain QYMF).